A 324-amino-acid chain; its full sequence is Quinolinate synthase (324 aa).

The iminosuccinate site is built by H39 and S56. Residue C101 participates in [4Fe-4S] cluster binding. Iminosuccinate-binding positions include 127-129 (YIN) and S144. C187 contributes to the [4Fe-4S] cluster binding site. Residues 213–215 (HPE) and T230 contribute to the iminosuccinate site. C280 lines the [4Fe-4S] cluster pocket.

This sequence belongs to the quinolinate synthase family. Type 2 subfamily. The cofactor is [4Fe-4S] cluster.

It localises to the cytoplasm. It catalyses the reaction iminosuccinate + dihydroxyacetone phosphate = quinolinate + phosphate + 2 H2O + H(+). It participates in cofactor biosynthesis; NAD(+) biosynthesis; quinolinate from iminoaspartate: step 1/1. In terms of biological role, catalyzes the condensation of iminoaspartate with dihydroxyacetone phosphate to form quinolinate. In Nostoc sp. (strain PCC 7120 / SAG 25.82 / UTEX 2576), this protein is Quinolinate synthase.